The chain runs to 156 residues: Ecotin (156 aa).

Residues 1–19 (MKALLIAAGVAALSSTAMA) form the signal peptide. The cysteines at positions 65 and 102 are disulfide-linked.

It belongs to the protease inhibitor I11 (ecotin) family. In terms of assembly, homodimer.

It is found in the periplasm. In terms of biological role, general inhibitor of family S1 serine proteases. The polypeptide is Ecotin (Pseudomonas aeruginosa (strain LESB58)).